The sequence spans 100 residues: Large ribosomal subunit protein uL23 (100 aa).

Belongs to the universal ribosomal protein uL23 family. In terms of assembly, part of the 50S ribosomal subunit. Contacts protein L29, and trigger factor when it is bound to the ribosome.

Its function is as follows. One of the early assembly proteins it binds 23S rRNA. One of the proteins that surrounds the polypeptide exit tunnel on the outside of the ribosome. Forms the main docking site for trigger factor binding to the ribosome. The sequence is that of Large ribosomal subunit protein uL23 from Dechloromonas aromatica (strain RCB).